Consider the following 291-residue polypeptide: m-AAA protease-interacting protein 1, mitochondrial (291 aa).

A mitochondrion-targeting transit peptide spans 1 to 96; the sequence is MALAARLLPL…SLPASPIRSY (96 aa).

Interacts with AFG3L2. Interacts with SPG7. Interacts with SMDT1/EMRE (via the N-terminal transit peptide); interaction is direct and takes place before maturation of SMDT1/EMRE.

It is found in the mitochondrion matrix. Promotes sorting of SMDT1/EMRE in mitochondria by ensuring its maturation. Interacts with the transit peptide region of SMDT1/EMRE precursor protein in the mitochondrial matrix, leading to protect it against protein degradation by YME1L1, thereby ensuring SMDT1/EMRE maturation by the mitochondrial processing peptidase (PMPCA and PMPCB). In Rattus norvegicus (Rat), this protein is m-AAA protease-interacting protein 1, mitochondrial.